An 834-amino-acid polypeptide reads, in one-letter code: ATP-dependent DNA helicase fml1 (834 aa).

Residues 80–248 (IVQKALFENV…NVIDSLHISR (169 aa)) form the Helicase ATP-binding domain. ATP is bound at residue 93-100 (LPTGLGKT). The short motif at 196–199 (DEAH) is the DEAH box element. A Helicase C-terminal domain is found at 416–582 (HLERIVTEYF…GLSLSEKSYR (167 aa)). Residues 650–690 (EESPFEICPVTYSIEQEKKLEKYKRVCLRGLDIHRNRRLSQ) form an interaction with MHF complex region. A disordered region spans residues 738–769 (NSTDRDTKQPKMHDFRQPLHPNPMTTLKRKGQ). Basic and acidic residues predominate over residues 740 to 754 (TDRDTKQPKMHDFRQ).

Belongs to the DEAD box helicase family. DEAH subfamily. FANCM sub-subfamily.

The protein resides in the cytoplasm. It is found in the nucleus. Its subcellular location is the nucleolus. It carries out the reaction ATP + H2O = ADP + phosphate + H(+). In terms of biological role, ATP-dependent DNA helicase involved in DNA damage repair by homologous recombination and in genome maintenance. Capable of unwinding D-loops. Plays a role in limiting crossover recombination during mitotic DNA double-strand break (DSB) repair. Component of a FANCM-MHF complex which promotes gene conversion at blocked replication forks, probably by reversal of the stalled fork. FANCM-MHF also promotes non-crossover recombination in meiotic cells. This is ATP-dependent DNA helicase fml1 from Schizosaccharomyces pombe (strain 972 / ATCC 24843) (Fission yeast).